A 251-amino-acid polypeptide reads, in one-letter code: 5-oxoprolinase subunit A (251 aa).

The protein belongs to the LamB/PxpA family. Forms a complex composed of PxpA, PxpB and PxpC.

The enzyme catalyses 5-oxo-L-proline + ATP + 2 H2O = L-glutamate + ADP + phosphate + H(+). Functionally, catalyzes the cleavage of 5-oxoproline to form L-glutamate coupled to the hydrolysis of ATP to ADP and inorganic phosphate. This Vibrio parahaemolyticus serotype O3:K6 (strain RIMD 2210633) protein is 5-oxoprolinase subunit A.